Consider the following 76-residue polypeptide: MSEEKEMTFEEAMKQLESIVEKLEEGNVPLEDAIAFFQEGMKLSKLCHDKLQHVEKQLEYMLREDGELVPFSPEEA.

It belongs to the XseB family. Heterooligomer composed of large and small subunits.

The protein localises to the cytoplasm. It carries out the reaction Exonucleolytic cleavage in either 5'- to 3'- or 3'- to 5'-direction to yield nucleoside 5'-phosphates.. In terms of biological role, bidirectionally degrades single-stranded DNA into large acid-insoluble oligonucleotides, which are then degraded further into small acid-soluble oligonucleotides. The chain is Exodeoxyribonuclease 7 small subunit from Geobacillus thermodenitrificans (strain NG80-2).